Reading from the N-terminus, the 405-residue chain is Argininosuccinate synthase (405 aa).

Residues 10 to 18 and A37 contribute to the ATP site; that span reads AFSGGLDTS. L-citrulline contacts are provided by Y90 and S95. G120 contacts ATP. 3 residues coordinate L-aspartate: T122, N126, and D127. N126 contacts L-citrulline. 5 residues coordinate L-citrulline: R130, S181, S190, E266, and Y278.

It belongs to the argininosuccinate synthase family. Type 1 subfamily. As to quaternary structure, homotetramer.

Its subcellular location is the cytoplasm. It carries out the reaction L-citrulline + L-aspartate + ATP = 2-(N(omega)-L-arginino)succinate + AMP + diphosphate + H(+). It participates in amino-acid biosynthesis; L-arginine biosynthesis; L-arginine from L-ornithine and carbamoyl phosphate: step 2/3. The protein is Argininosuccinate synthase of Rhizorhabdus wittichii (strain DSM 6014 / CCUG 31198 / JCM 15750 / NBRC 105917 / EY 4224 / RW1) (Sphingomonas wittichii).